The chain runs to 463 residues: MKNYRTESDSFGEIQIEEKFYWGAQTQRSLENFKIGKQKMPEILIRALAILKKCAAQVNHEFGDLEAKIAISIDKATDRILEGEFEDNFPLVVWQTGSGTQTNMNMNEVIASIANEELTGKKGGKSPVHPNDHVNKGQSSNDSFPTAMHIATVLATKQQLIPALNNILTSLQDKSKDWDKIIKIGRTHLQDATPLTLKQEFSGYITQIEYALERIENALQKVYLLAQGGTAVGTGINSKIGFDIKFAEKVAEFTKQPFKTAPNKFESLAAHDALVEFSGTLNTIAVSLMKIANDIRLLGSGPRCGLGELHLPENEPGSSIMPGKVNPTQVEALTMVCSQVMGNHVTVTIAGSNGHLELNVFKPVIIYNILQSIELLSDSVNSFVTHCVKGLEPNIARINDLRDKSLMLVTALNPHIGYDNAAKIAKEAHKHGITLKEAAKKLNLLSEAKFDKIVVPEKMVSQS.

Residues 98 to 100 (SGT), 129 to 132 (HPND), 139 to 141 (SSN), and Thr-187 each bind substrate. Positions 121-141 (KKGGKSPVHPNDHVNKGQSSN) are disordered. His-188 functions as the Proton donor/acceptor in the catalytic mechanism. Residue Ser-318 is part of the active site. Substrate is bound by residues Ser-319 and 324–326 (KVN).

The protein belongs to the class-II fumarase/aspartase family. Fumarase subfamily. As to quaternary structure, homotetramer.

It is found in the cytoplasm. It catalyses the reaction (S)-malate = fumarate + H2O. Its pathway is carbohydrate metabolism; tricarboxylic acid cycle; (S)-malate from fumarate: step 1/1. Its function is as follows. Involved in the TCA cycle. Catalyzes the stereospecific interconversion of fumarate to L-malate. The chain is Fumarate hydratase class II from Rickettsia conorii (strain ATCC VR-613 / Malish 7).